The following is a 518-amino-acid chain: ATP synthase subunit beta 2 (518 aa).

Residue 154–161 (GGAGVGKT) participates in ATP binding. Residues 455 to 518 (IDEAKGKAKP…TDHAADTHES (64 aa)) are disordered. Basic and acidic residues-rich tracts occupy residues 473-485 (PDSKTEARADPKP) and 507-518 (PETDHAADTHES).

Belongs to the ATPase alpha/beta chains family. F-type ATPases have 2 components, CF(1) - the catalytic core - and CF(0) - the membrane proton channel. CF(1) has five subunits: alpha(3), beta(3), gamma(1), delta(1), epsilon(1). CF(0) has three main subunits: a(1), b(2) and c(9-12). The alpha and beta chains form an alternating ring which encloses part of the gamma chain. CF(1) is attached to CF(0) by a central stalk formed by the gamma and epsilon chains, while a peripheral stalk is formed by the delta and b chains.

The protein resides in the cell inner membrane. The enzyme catalyses ATP + H2O + 4 H(+)(in) = ADP + phosphate + 5 H(+)(out). Produces ATP from ADP in the presence of a proton gradient across the membrane. The catalytic sites are hosted primarily by the beta subunits. This Albidiferax ferrireducens (strain ATCC BAA-621 / DSM 15236 / T118) (Rhodoferax ferrireducens) protein is ATP synthase subunit beta 2.